Consider the following 464-residue polypeptide: L-cystine uptake protein TcyP (464 aa).

10 helical membrane passes run Thr-3–Met-23, Val-34–Pro-54, Tyr-73–Phe-93, Gly-107–Ala-127, Pro-184–Val-204, Ile-225–Met-245, Phe-263–Ala-283, Ala-347–Leu-367, Phe-371–Gly-391, and Phe-395–Ile-415.

The protein belongs to the dicarboxylate/amino acid:cation symporter (DAACS) (TC 2.A.23) family.

The protein localises to the membrane. Mediates uptake of L-cystine, the oxidized form of L-cysteine. This chain is L-cystine uptake protein TcyP, found in Bacillus thuringiensis subsp. konkukian (strain 97-27).